Reading from the N-terminus, the 383-residue chain is 3-phytase (383 aa).

Residues 1 to 26 (MNHSKTLLLTAAAGLMLTCGAVSSQA) form the signal peptide. The propeptide occupies 27 to 29 (KHK). A BPP domain is found at 30–362 (LSDPYHFTVN…VPWERIADQI (333 aa)).

Ca(2+) serves as cofactor.

The protein localises to the secreted. The catalysed reaction is 1D-myo-inositol hexakisphosphate + H2O = 1D-myo-inositol 1,2,4,5,6-pentakisphosphate + phosphate. Its function is as follows. Catalyzes the hydrolysis of inorganic orthophosphate from phytate. Only phytate, ADP, and ATP were hydrolyzed (100, 75, and 50% of the relative activity, respectively). The chain is 3-phytase (phyC) from Bacillus subtilis.